The primary structure comprises 66 residues: Stress-induced protein KIN1 (66 aa).

Residues 1–13 (MSETNKNAFQAGQ) show a composition bias toward polar residues. A disordered region spans residues 1-52 (MSETNKNAFQAGQTAGKAEEKSNVLLDKAKDAAAGAGAGAQQAGKSVSDAAA). Basic and acidic residues predominate over residues 17–31 (KAEEKSNVLLDKAKD). 2 repeats span residues 31-35 (DAAAG) and 49-53 (DAAAG). The segment covering 32–45 (AAAGAGAGAQQAGK) has biased composition (low complexity).

This chain is Stress-induced protein KIN1 (KIN1), found in Arabidopsis thaliana (Mouse-ear cress).